The following is an 86-amino-acid chain: Large ribosomal subunit protein bL27 (86 aa).

Residues 1 to 22 (MAHKKAGGSSRNGRDSESKRLG) form a disordered region.

This sequence belongs to the bacterial ribosomal protein bL27 family.

This Acidithiobacillus ferrooxidans (strain ATCC 23270 / DSM 14882 / CIP 104768 / NCIMB 8455) (Ferrobacillus ferrooxidans (strain ATCC 23270)) protein is Large ribosomal subunit protein bL27.